Here is a 675-residue protein sequence, read N- to C-terminus: uncharacterized protein (675 aa).

Transmembrane regions (helical) follow at residues 2–22 (QHTFIYDTCLWILSILIDFFF), 397–417 (LFLLALGALPGAILFSPVFIA), 448–468 (LLVALGMTPILYSFYALLCCY), and 481–501 (IFVYTVPIISTFLFPMVTYAA). 2 disordered regions span residues 616–635 (YSPNPSALPPSDEEEKDIND) and 646–675 (QRMGQRMTEIRSRDTPPEEVFSESDEELSD). Acidic residues predominate over residues 665–675 (VFSESDEELSD). Position 669 is a phosphoserine (serine 669).

This sequence belongs to the 1-acyl-sn-glycerol-3-phosphate acyltransferase family.

It localises to the endoplasmic reticulum membrane. This is an uncharacterized protein from Schizosaccharomyces pombe (strain 972 / ATCC 24843) (Fission yeast).